Reading from the N-terminus, the 106-residue chain is Iron-sulfur cluster assembly protein CyaY (106 aa).

The protein belongs to the frataxin family. Interacts with IscS. Certain pairs of proteins can bind simultaneously to IscS; IscS-IscU-CyaY complexes can be isolated in vitro, but (IscS-TusA-CyaY) complexes cannot.

Functionally, involved in iron-sulfur (Fe-S) cluster assembly. May act as a regulator of Fe-S biogenesis. The protein is Iron-sulfur cluster assembly protein CyaY of Escherichia coli O157:H7.